The primary structure comprises 870 residues: LPS-assembly protein LptD (870 aa).

The first 25 residues, 1–25 (MKQGKSFIFYCLVLLLCGFQQLSSA), serve as a signal peptide directing secretion.

Belongs to the LptD family. In terms of assembly, component of the lipopolysaccharide transport and assembly complex. Interacts with LptE and LptA.

The protein resides in the cell outer membrane. Its function is as follows. Together with LptE, is involved in the assembly of lipopolysaccharide (LPS) at the surface of the outer membrane. This is LPS-assembly protein LptD from Coxiella burnetii (strain RSA 493 / Nine Mile phase I).